Reading from the N-terminus, the 996-residue chain is PDZ domain-containing protein C23G3.12c (996 aa).

The interval 1-35 (MSIKKRARAGSKSDDIGNKTPKKNGIEHEATKSSE) is disordered. PDZ domains are found at residues 280-358 (SRLG…QRGS), 745-827 (EFRA…LREG), and 860-930 (RAVR…STFD). The tract at residues 972 to 996 (KNPSMGFTIDEEVDDNTFDTEGEQQ) is disordered. Over residues 980-996 (IDEEVDDNTFDTEGEQQ) the composition is skewed to acidic residues.

This sequence belongs to the peptidase S1C family.

The sequence is that of PDZ domain-containing protein C23G3.12c from Schizosaccharomyces pombe (strain 972 / ATCC 24843) (Fission yeast).